We begin with the raw amino-acid sequence, 343 residues long: Nuclear hormone receptor family member nhr-167 (343 aa).

Residues histidine 5–leucine 81 constitute a DNA-binding region (nuclear receptor). NR C4-type zinc fingers lie at residues cysteine 8–cysteine 28 and cysteine 45–cysteine 64. In terms of domain architecture, NR LBD spans threonine 101 to alanine 339.

It belongs to the nuclear hormone receptor family.

It is found in the nucleus. Orphan nuclear receptor. The chain is Nuclear hormone receptor family member nhr-167 (nhr-167) from Caenorhabditis elegans.